The chain runs to 286 residues: Phosphate import ATP-binding protein PstB (286 aa).

Residues 40-281 (VVARDFSIYY…PKDSMTEDYI (242 aa)) form the ABC transporter domain. Residue 72–79 (GPSGCGKS) coordinates ATP.

This sequence belongs to the ABC transporter superfamily. Phosphate importer (TC 3.A.1.7) family. The complex is composed of two ATP-binding proteins (PstB), two transmembrane proteins (PstC and PstA) and a solute-binding protein (PstS).

The protein localises to the cell inner membrane. It catalyses the reaction phosphate(out) + ATP + H2O = ADP + 2 phosphate(in) + H(+). Functionally, part of the ABC transporter complex PstSACB involved in phosphate import. Responsible for energy coupling to the transport system. In Chlorobaculum tepidum (strain ATCC 49652 / DSM 12025 / NBRC 103806 / TLS) (Chlorobium tepidum), this protein is Phosphate import ATP-binding protein PstB.